Consider the following 409-residue polypeptide: Tyrosine--tRNA ligase (409 aa).

Tyr-39 lines the L-tyrosine pocket. A 'HIGH' region motif is present at residues 44–53; sequence PTAPSLHVGS. The L-tyrosine site is built by Tyr-176 and Gln-180. Residues 236-240 carry the 'KMSKS' region motif; that stretch reads KMGKT. An ATP-binding site is contributed by Lys-239. The region spanning 346–409 is the S4 RNA-binding domain; that stretch reads IGIVDALVGL…KKKHGILRKA (64 aa).

Belongs to the class-I aminoacyl-tRNA synthetase family. TyrS type 1 subfamily. In terms of assembly, homodimer.

The protein localises to the cytoplasm. It catalyses the reaction tRNA(Tyr) + L-tyrosine + ATP = L-tyrosyl-tRNA(Tyr) + AMP + diphosphate + H(+). Functionally, catalyzes the attachment of tyrosine to tRNA(Tyr) in a two-step reaction: tyrosine is first activated by ATP to form Tyr-AMP and then transferred to the acceptor end of tRNA(Tyr). In Novosphingobium aromaticivorans (strain ATCC 700278 / DSM 12444 / CCUG 56034 / CIP 105152 / NBRC 16084 / F199), this protein is Tyrosine--tRNA ligase.